A 292-amino-acid polypeptide reads, in one-letter code: Syntaxin-19 (292 aa).

The t-SNARE coiled-coil homology domain maps to 207 to 269 (LSEIEQRHKE…NNTKEKFGLA (63 aa)).

This sequence belongs to the syntaxin family. As to quaternary structure, interacts with EGFR. In terms of tissue distribution, expressed in stomach, lung and skin (at protein level). In stomach, strongly expressed in the mucosa of the fundus, in epithelial cells of gastric pits, and in gastric glands (at protein level). In skin, expressed in the epidermis, dermis, and epithelial layer of the hair bulb (at protein level).

Its subcellular location is the cell membrane. The protein localises to the cytoplasm. Functionally, plays a role in endosomal trafficking of the epidermal growth factor receptor (EGFR). This chain is Syntaxin-19, found in Mus musculus (Mouse).